We begin with the raw amino-acid sequence, 631 residues long: Probable methyltransferase PMT16 (631 aa).

Residues 1-14 lie on the Cytoplasmic side of the membrane; sequence MNLFTRISSRTKKA. A helical; Signal-anchor for type II membrane protein membrane pass occupies residues 15 to 35; the sequence is NLYYVTLVALLCIASYLLGIW. The Lumenal segment spans residues 36-631; that stretch reads QNTAVNPRAA…EDKNNTSALS (596 aa). Asparagine 61, asparagine 230, and asparagine 626 each carry an N-linked (GlcNAc...) asparagine glycan.

This sequence belongs to the methyltransferase superfamily.

The protein localises to the endoplasmic reticulum membrane. The sequence is that of Probable methyltransferase PMT16 from Arabidopsis thaliana (Mouse-ear cress).